The sequence spans 126 residues: Small ribosomal subunit protein uS13c (126 aa).

The interval 97–126 (PLRGQRTRTNARTRRGGKKTVAGKKKAPRK) is disordered. The span at 101-126 (QRTRTNARTRRGGKKTVAGKKKAPRK) shows a compositional bias: basic residues.

It belongs to the universal ribosomal protein uS13 family. Part of the 30S ribosomal subunit.

It is found in the plastid. It localises to the chloroplast. Located at the top of the head of the 30S subunit, it contacts several helices of the 16S rRNA. The protein is Small ribosomal subunit protein uS13c of Pyropia yezoensis (Susabi-nori).